Consider the following 132-residue polypeptide: Large ribosomal subunit protein uL14 (132 aa).

The protein belongs to the universal ribosomal protein uL14 family. Part of the 50S ribosomal subunit. Forms a cluster with proteins L3 and L24e, part of which may contact the 16S rRNA in 2 intersubunit bridges.

Functionally, binds to 23S rRNA. Forms part of two intersubunit bridges in the 70S ribosome. In Thermoplasma acidophilum (strain ATCC 25905 / DSM 1728 / JCM 9062 / NBRC 15155 / AMRC-C165), this protein is Large ribosomal subunit protein uL14.